A 455-amino-acid chain; its full sequence is Glutamyl-tRNA reductase (455 aa).

Substrate is bound by residues 49-52 (TCNR), Ser-109, 114-116 (ETQ), and Gln-120. The active-site Nucleophile is Cys-50. Residue 189 to 194 (GAGKMG) participates in NADP(+) binding.

It belongs to the glutamyl-tRNA reductase family. As to quaternary structure, homodimer.

It carries out the reaction (S)-4-amino-5-oxopentanoate + tRNA(Glu) + NADP(+) = L-glutamyl-tRNA(Glu) + NADPH + H(+). The protein operates within porphyrin-containing compound metabolism; protoporphyrin-IX biosynthesis; 5-aminolevulinate from L-glutamyl-tRNA(Glu): step 1/2. Functionally, catalyzes the NADPH-dependent reduction of glutamyl-tRNA(Glu) to glutamate 1-semialdehyde (GSA). This chain is Glutamyl-tRNA reductase, found in Bacillus subtilis (strain 168).